Here is a 395-residue protein sequence, read N- to C-terminus: MVNTEVYIVSAVRTPMGSFGGSFASLPATKLGSIAIKGALERVNIKPSDVDEVFMGNVVSANLGQNPARQCALGAGLPRSIVCTTVNKVCASGMKATILGAQTIMTGNAEIVVAGGTESMSNAPYYAPKNRFGAKYGNVELVDGLLRDGLSDAYDGLPMGNAAELCAEEHSIDRASQDAFAISSYKRAQNAQATKAFEQEIVPVEVPVGRGKPNKLVTEDEEPKNLNEDKLKSVRAVFKSNGTVTAANASTLNDGASALVLMSAAKVKELGLKPLAKIIGWGEAAQDPERFTTSPSLAIPKALKHAGIEASQVDYYEINEAFSVVAVANTKILGLDPERVNINGGGVAMGHPLGSSGSRIICTLAYILAQKDAKIGVAAVCNGGGGASSIVIERV.

Cysteine 90 functions as the Acyl-thioester intermediate in the catalytic mechanism. The CoA site is built by tyrosine 185 and lysine 230. Tyrosine 185 is a binding site for K(+). Residues alanine 246, alanine 247, and alanine 249 each contribute to the K(+) site. Serine 250 lines the CoA pocket. Valine 347 serves as a coordination point for K(+). Residues histidine 351 and cysteine 381 each act as proton acceptor in the active site.

The protein belongs to the thiolase-like superfamily. Thiolase family. Homotetramer.

It is found in the cytoplasm. It carries out the reaction 2 acetyl-CoA = acetoacetyl-CoA + CoA. The protein operates within metabolic intermediate biosynthesis; (R)-mevalonate biosynthesis; (R)-mevalonate from acetyl-CoA: step 1/3. Functionally, acetyl-CoA acetyltransferase; part of the first module of ergosterol biosynthesis pathway that includes the early steps of the pathway, conserved across all eukaryotes, and which results in the formation of mevalonate from acetyl-coenzyme A (acetyl-CoA). Erg10 catalyzes the formation of acetoacetyl-CoA from acetyl-CoA. The first module starts with the action of the cytosolic acetyl-CoA acetyltransferase eg10 that catalyzes the formation of acetoacetyl-CoA. The hydroxymethylglutaryl-CoA synthases erg13 then condenses acetyl-CoA with acetoacetyl-CoA to form HMG-CoA. The rate-limiting step of the early module is the reduction to mevalonate by the 3-hydroxy-3-methylglutaryl-coenzyme A (HMG-CoA) reductases hcs1. The chain is Acetyl-CoA acetyltransferase (erg10) from Schizosaccharomyces pombe (strain 972 / ATCC 24843) (Fission yeast).